The primary structure comprises 1353 residues: Trifunctional purine biosynthetic protein adenosine-3 (1353 aa).

One can recognise an ATP-grasp domain in the interval 114 to 321 (KDFMLRHGIP…LFDVMEACCS (208 aa)). ATP is bound by residues 193–196 (EELL), Glu200, Arg223, and Asn232. The Mg(2+) site is built by Glu291 and Asn293. The tract at residues 441 to 1155 (GLSYKDSGVD…QKMLSQRRKR (715 aa)) is AIRS domain. Phosphoserine is present on residues Ser814 and Ser816. The interval 1153 to 1353 (RKRVAVLISG…ALISPEVSSQ (201 aa)) is GART domain. 1164–1166 (GSN) lines the N(1)-(5-phospho-beta-D-ribosyl)glycinamide pocket. (6R)-10-formyltetrahydrofolate-binding positions include Arg1219, 1244–1247 (MRVL), and Asn1261. His1263 functions as the Proton donor in the catalytic mechanism. 1295-1299 (DEGVD) lines the (6R)-10-formyltetrahydrofolate pocket. 1325 to 1328 (HKAE) is a N(1)-(5-phospho-beta-D-ribosyl)glycinamide binding site.

It in the N-terminal section; belongs to the GARS family. The protein in the central section; belongs to the AIR synthase family. This sequence in the C-terminal section; belongs to the GART family. Homodimer. Mg(2+) serves as cofactor. Mn(2+) is required as a cofactor.

The enzyme catalyses 5-phospho-beta-D-ribosylamine + glycine + ATP = N(1)-(5-phospho-beta-D-ribosyl)glycinamide + ADP + phosphate + H(+). It carries out the reaction 2-formamido-N(1)-(5-O-phospho-beta-D-ribosyl)acetamidine + ATP = 5-amino-1-(5-phospho-beta-D-ribosyl)imidazole + ADP + phosphate + H(+). It catalyses the reaction N(1)-(5-phospho-beta-D-ribosyl)glycinamide + (6R)-10-formyltetrahydrofolate = N(2)-formyl-N(1)-(5-phospho-beta-D-ribosyl)glycinamide + (6S)-5,6,7,8-tetrahydrofolate + H(+). The protein operates within purine metabolism; IMP biosynthesis via de novo pathway; 5-amino-1-(5-phospho-D-ribosyl)imidazole from N(2)-formyl-N(1)-(5-phospho-D-ribosyl)glycinamide: step 2/2. It participates in purine metabolism; IMP biosynthesis via de novo pathway; N(1)-(5-phospho-D-ribosyl)glycinamide from 5-phospho-alpha-D-ribose 1-diphosphate: step 2/2. Its pathway is purine metabolism; IMP biosynthesis via de novo pathway; N(2)-formyl-N(1)-(5-phospho-D-ribosyl)glycinamide from N(1)-(5-phospho-D-ribosyl)glycinamide (10-formyl THF route): step 1/1. Functionally, trifunctional enzyme that catalyzes three distinct reactions as part of the 'de novo' inosine monophosphate biosynthetic pathway. The protein is Trifunctional purine biosynthetic protein adenosine-3 of Drosophila melanogaster (Fruit fly).